The sequence spans 290 residues: DegV domain-containing protein MG450 (290 aa).

A DegV domain is found at isoleucine 3–threonine 289. The hexadecanoate site is built by threonine 65 and serine 97.

Its function is as follows. May bind long-chain fatty acids, such as palmitate, and may play a role in lipid transport or fatty acid metabolism. This Mycoplasma genitalium (strain ATCC 33530 / DSM 19775 / NCTC 10195 / G37) (Mycoplasmoides genitalium) protein is DegV domain-containing protein MG450.